A 485-amino-acid chain; its full sequence is Sperm-associated antigen 8 (485 aa).

Disordered regions lie at residues 1 to 42, 75 to 98, and 127 to 215; these read METN…SPRS, KTPAPCSEFMEPSSDPSLLGEPCA, and TTTD…CIPP. The segment covering 132-150 has biased composition (low complexity); the sequence is SSNPGPVPGSSSGPVLGSS. Over residues 151-191 the composition is skewed to gly residues; sequence SGAGHGSGSGSGPGCGSVPGSGSGPGPGSGPGSGPGHGSGS. Mn stretches follow at residues 327 to 340 and 379 to 393; these read SSTTQKDSYQPPGN and ESVTHHDYRMELAQA.

It belongs to the SPAG8 family. In terms of assembly, microtubule inner protein component of sperm flagellar doublet microtubules. Interacts with FHL5 (via second LIM domain). Interacts with RANBP9. Expressed in testis (germ cells), but not in liver, kidney, prostate and small intestine. Expressed in airway epithelial cells.

Its subcellular location is the cytoplasm. It localises to the nucleus. It is found in the cytoplasmic vesicle. The protein localises to the secretory vesicle. The protein resides in the acrosome. Its subcellular location is the cytoskeleton. It localises to the microtubule organizing center. It is found in the spindle. The protein localises to the cilium axoneme. The protein resides in the flagellum axoneme. Microtubule inner protein (MIP) part of the dynein-decorated doublet microtubules (DMTs) in cilia axoneme, which is required for motile cilia beating. Plays a role in spermatogenesis by enhancing the binding of CREM isoform tau to its coactivator FHL5 and increasing the FHL5-regulated transcriptional activation of CREM isoform tau. Involved in the acrosome reaction and in binding of sperm to the zona pellucida. Plays a role in regulation of the cell cycle by controlling progression through the G2/M phase, possibly by delaying the activation of CDK1 which is required for entry into mitosis. May play a role in fertility and microtubule formation through interaction with RANBP9. This is Sperm-associated antigen 8 from Homo sapiens (Human).